A 353-amino-acid chain; its full sequence is DNA polymerase IV (353 aa).

The UmuC domain occupies 6–187; that stretch reads IIHVDCDCFY…LPVSKLHGVG (182 aa). 2 residues coordinate Mg(2+): Asp-10 and Asp-105. The active site involves Glu-106.

This sequence belongs to the DNA polymerase type-Y family. Monomer. The cofactor is Mg(2+).

The protein resides in the cytoplasm. It catalyses the reaction DNA(n) + a 2'-deoxyribonucleoside 5'-triphosphate = DNA(n+1) + diphosphate. Poorly processive, error-prone DNA polymerase involved in untargeted mutagenesis. Copies undamaged DNA at stalled replication forks, which arise in vivo from mismatched or misaligned primer ends. These misaligned primers can be extended by PolIV. Exhibits no 3'-5' exonuclease (proofreading) activity. May be involved in translesional synthesis, in conjunction with the beta clamp from PolIII. The polypeptide is DNA polymerase IV (Pseudomonas fluorescens (strain Pf0-1)).